The sequence spans 444 residues: MKNIIYCILLLFSFNSYALETINIEHGKADPTPIAVNNFEADSASDNTVGHEIVKVISNDLKLCGLFHPISSASFIEEKTGIGYKPLFAAWRQINASLLVNGAVKKLENGKLKISFILWDTLLEKQLGGEVLELPENLWRRAAHKIADKIYEKITGDTGYFDSKIIYVAESGPDLKKVKRIALMDYDGANNRYITDGKSLVLTPRFSGSADKIFYVSYATKRRTLVYEKDLKTGKESIVGDFAGISFAPRFAPDGRKAVMSIAKNGSTHIYEIDLATKRLHKLTDGFGINTSPSYSPDGRRIVFNSDRNGVPQLYIMNSDGSNVQRISFGGGSYMAPSWSPRGDYIAFTKIIRGSEGKTFNIGVMKPYPQDDENSERVIASGYLVESPCWSPNGRVIMFAKGWPSNGKSSGKNRIYAIDLTGHNEREIKTPGDASDPEWSNLLN.

The signal sequence occupies residues 1-18 (MKNIIYCILLLFSFNSYA).

The protein belongs to the TolB family. In terms of assembly, the Tol-Pal system is composed of five core proteins: the inner membrane proteins TolA, TolQ and TolR, the periplasmic protein TolB and the outer membrane protein Pal. They form a network linking the inner and outer membranes and the peptidoglycan layer.

The protein resides in the periplasm. Functionally, part of the Tol-Pal system, which plays a role in outer membrane invagination during cell division and is important for maintaining outer membrane integrity. In Rickettsia bellii (strain OSU 85-389), this protein is Tol-Pal system protein TolB.